Here is a 205-residue protein sequence, read N- to C-terminus: Probable GTP-binding protein EngB (205 aa).

One can recognise an EngB-type G domain in the interval 27 to 201 (QGMEVAFAGR…QNKLNAWFSG (175 aa)). GTP-binding positions include 35-42 (GRSNAGKS), 62-66 (GRTQL), 80-83 (DLPG), 147-150 (TKVD), and 180-182 (FSS). Mg(2+) is bound by residues Ser42 and Thr64.

This sequence belongs to the TRAFAC class TrmE-Era-EngA-EngB-Septin-like GTPase superfamily. EngB GTPase family. Mg(2+) serves as cofactor.

In terms of biological role, necessary for normal cell division and for the maintenance of normal septation. This is Probable GTP-binding protein EngB from Hamiltonella defensa subsp. Acyrthosiphon pisum (strain 5AT).